The chain runs to 451 residues: Phosphoglucosamine mutase (451 aa).

The active-site Phosphoserine intermediate is S101. S101, D240, D242, and D244 together coordinate Mg(2+). S101 is modified (phosphoserine).

Belongs to the phosphohexose mutase family. Requires Mg(2+) as cofactor. Post-translationally, activated by phosphorylation.

The catalysed reaction is alpha-D-glucosamine 1-phosphate = D-glucosamine 6-phosphate. In terms of biological role, catalyzes the conversion of glucosamine-6-phosphate to glucosamine-1-phosphate. The protein is Phosphoglucosamine mutase of Streptococcus pyogenes serotype M18 (strain MGAS8232).